A 419-amino-acid polypeptide reads, in one-letter code: Protein phosphatase methylesterase 1 (419 aa).

The span at 1 to 12 shows a compositional bias: basic residues; sequence MSQLHRGMHKKP. The segment at 1–75 is disordered; that stretch reads MSQLHRGMHK…KSAASPTVPA (75 aa). Residues 32-52 are compositionally biased toward acidic residues; the sequence is TETEETVECTEEEEEQDETDG. Active-site residues include Ser-230, Asp-256, and His-383.

This sequence belongs to the AB hydrolase superfamily.

The enzyme catalyses [phosphatase 2A protein]-C-terminal L-leucine methyl ester + H2O = [phosphatase 2A protein]-C-terminal L-leucine + methanol + H(+). In terms of biological role, demethylates proteins that have been reversibly carboxymethylated. Demethylates the phosphatase PP2A catalytic subunit. In Yarrowia lipolytica (strain CLIB 122 / E 150) (Yeast), this protein is Protein phosphatase methylesterase 1 (PPE1).